We begin with the raw amino-acid sequence, 448 residues long: Trigger factor (448 aa).

The 86-residue stretch at Gly161–Pro246 folds into the PPIase FKBP-type domain. A disordered region spans residues Ala428–Ala448. Over residues Gly437–Ala448 the composition is skewed to acidic residues.

Belongs to the FKBP-type PPIase family. Tig subfamily.

It localises to the cytoplasm. The enzyme catalyses [protein]-peptidylproline (omega=180) = [protein]-peptidylproline (omega=0). Functionally, involved in protein export. Acts as a chaperone by maintaining the newly synthesized protein in an open conformation. Functions as a peptidyl-prolyl cis-trans isomerase. The polypeptide is Trigger factor (Chromohalobacter salexigens (strain ATCC BAA-138 / DSM 3043 / CIP 106854 / NCIMB 13768 / 1H11)).